We begin with the raw amino-acid sequence, 183 residues long: Peptide deformylase (183 aa).

2 residues coordinate Fe cation: Cys-110 and His-153. The active site involves Glu-154. His-157 serves as a coordination point for Fe cation.

This sequence belongs to the polypeptide deformylase family. The cofactor is Fe(2+).

The enzyme catalyses N-terminal N-formyl-L-methionyl-[peptide] + H2O = N-terminal L-methionyl-[peptide] + formate. Functionally, removes the formyl group from the N-terminal Met of newly synthesized proteins. Requires at least a dipeptide for an efficient rate of reaction. N-terminal L-methionine is a prerequisite for activity but the enzyme has broad specificity at other positions. In Listeria welshimeri serovar 6b (strain ATCC 35897 / DSM 20650 / CCUG 15529 / CIP 8149 / NCTC 11857 / SLCC 5334 / V8), this protein is Peptide deformylase.